Consider the following 627-residue polypeptide: Glyco-Gag protein (627 aa).

The Cytoplasmic portion of the chain corresponds to 1 to 63 (LGDVPRTSGA…FLLSVWNRSR (63 aa)). The helical transmembrane segment at 64 to 86 (AARLVCCSIVLCCLCLTVFLYLS) threads the bilayer. At 87–627 (ENMGQTVTTP…PQASLLTLDD (541 aa)) the chain is on the extracellular side. Asn113 carries an N-linked (GlcNAc...) asparagine; by host glycan. A compositionally biased stretch (pro residues) spans 199 to 215 (PPSAPSLPPEPPFPTPP). Disordered regions lie at residues 199 to 310 (PPSA…RQGG) and 523 to 627 (RETP…TLDD). Composition is skewed to basic and acidic residues over residues 523-555 (RETP…EKER) and 575-608 (RQDR…DCPK). The CCHC-type zinc-finger motif lies at 593 to 608 (CAYCKEKGHWARDCPK).

Post-translationally, glycosylated by host. Cleaved by host near the middle of the molecule, releasing the c-terminal half containing capsid and nucleoprotein domains op GAG.

The protein resides in the host cell membrane. Plays a role in viral particle release. Presumably acts by facilitating the fission of the virion bud at the cell surface. May prevent the antiviral activity of murine APOBEC3. The chain is Glyco-Gag protein from Friend murine leukemia virus (isolate 57) (FrMLV).